The sequence spans 640 residues: 1-deoxy-D-xylulose-5-phosphate synthase (640 aa).

Thiamine diphosphate is bound by residues His-79 and 120–122 (GHS). Asp-151 provides a ligand contact to Mg(2+). Residues 152 to 153 (GA), Asn-180, Tyr-287, and Glu-369 each bind thiamine diphosphate. Position 180 (Asn-180) interacts with Mg(2+).

It belongs to the transketolase family. DXPS subfamily. In terms of assembly, homodimer. Mg(2+) is required as a cofactor. It depends on thiamine diphosphate as a cofactor.

It carries out the reaction D-glyceraldehyde 3-phosphate + pyruvate + H(+) = 1-deoxy-D-xylulose 5-phosphate + CO2. It functions in the pathway metabolic intermediate biosynthesis; 1-deoxy-D-xylulose 5-phosphate biosynthesis; 1-deoxy-D-xylulose 5-phosphate from D-glyceraldehyde 3-phosphate and pyruvate: step 1/1. Functionally, catalyzes the acyloin condensation reaction between C atoms 2 and 3 of pyruvate and glyceraldehyde 3-phosphate to yield 1-deoxy-D-xylulose-5-phosphate (DXP). The sequence is that of 1-deoxy-D-xylulose-5-phosphate synthase from Thioalkalivibrio sulfidiphilus (strain HL-EbGR7).